A 302-amino-acid chain; its full sequence is Plant UBX domain-containing protein 3 (302 aa).

2 disordered regions span residues 1 to 64 and 79 to 98; these read MSSK…PKHD and VEGP…TGRL. The region spanning 113–177 is the SEP domain; the sequence is PVIHNIIFWS…NLMRRDEKCP (65 aa). A UBX domain is found at 224–301; it reads ETLPSTSIQL…GLASSVVIQK (78 aa).

As to quaternary structure, interacts with CDC48A.

The chain is Plant UBX domain-containing protein 3 from Arabidopsis thaliana (Mouse-ear cress).